Here is a 261-residue protein sequence, read N- to C-terminus: ATP synthase subunit a (261 aa).

The next 5 helical transmembrane spans lie at 28 to 48 (AVHLDSLGWSVFLGLVFLTIF), 89 to 109 (IAPLSLTIFVWILLMNSMDWV), 140 to 160 (NITFGLALGVFILIIYYSIKV), 203 to 223 (LFGNLYAGELIFLLIATIGVF), and 229 to 249 (FLWAAFHLLVIPLQAFIFMML).

This sequence belongs to the ATPase A chain family. F-type ATPases have 2 components, CF(1) - the catalytic core - and CF(0) - the membrane proton channel. CF(1) has five subunits: alpha(3), beta(3), gamma(1), delta(1), epsilon(1). CF(0) has three main subunits: a(1), b(2) and c(9-12). The alpha and beta chains form an alternating ring which encloses part of the gamma chain. CF(1) is attached to CF(0) by a central stalk formed by the gamma and epsilon chains, while a peripheral stalk is formed by the delta and b chains.

The protein localises to the cell inner membrane. In terms of biological role, key component of the proton channel; it plays a direct role in the translocation of protons across the membrane. The chain is ATP synthase subunit a from Colwellia psychrerythraea (strain 34H / ATCC BAA-681) (Vibrio psychroerythus).